Reading from the N-terminus, the 412-residue chain is Acetate kinase (412 aa).

Residue Asn-10 coordinates Mg(2+). ATP is bound at residue Lys-17. The tract at residues 40–61 (ETSRLAHTPSAGGGAEPRERTG) is disordered. Arg-95 serves as a coordination point for substrate. Residue Asp-152 is the Proton donor/acceptor of the active site. Residues 212–216 (HLGNG), 286–288 (DMR), and 334–338 (GVGEN) each bind ATP. Mg(2+) is bound at residue Glu-388.

The protein belongs to the acetokinase family. In terms of assembly, homodimer. Mg(2+) is required as a cofactor. The cofactor is Mn(2+).

The protein localises to the cytoplasm. The enzyme catalyses acetate + ATP = acetyl phosphate + ADP. Its pathway is metabolic intermediate biosynthesis; acetyl-CoA biosynthesis; acetyl-CoA from acetate: step 1/2. Its function is as follows. Catalyzes the formation of acetyl phosphate from acetate and ATP. Can also catalyze the reverse reaction. The sequence is that of Acetate kinase from Streptomyces griseus subsp. griseus (strain JCM 4626 / CBS 651.72 / NBRC 13350 / KCC S-0626 / ISP 5235).